The primary structure comprises 581 residues: Arginine--tRNA ligase (581 aa).

The 'HIGH' region signature appears at 126–136; that stretch reads PNLAKEMHVGH.

The protein belongs to the class-I aminoacyl-tRNA synthetase family. As to quaternary structure, monomer.

The protein localises to the cytoplasm. The catalysed reaction is tRNA(Arg) + L-arginine + ATP = L-arginyl-tRNA(Arg) + AMP + diphosphate. This Shewanella loihica (strain ATCC BAA-1088 / PV-4) protein is Arginine--tRNA ligase.